A 379-amino-acid chain; its full sequence is Lipoyl synthase, mitochondrial (379 aa).

7 residues coordinate [4Fe-4S] cluster: cysteine 94, cysteine 99, cysteine 105, cysteine 126, cysteine 130, cysteine 133, and serine 342. The region spanning 109–331 (GEDNGAATAT…EKEAMSMGFL (223 aa)) is the Radical SAM core domain.

The protein belongs to the radical SAM superfamily. Lipoyl synthase family. [4Fe-4S] cluster serves as cofactor.

It localises to the mitochondrion. It catalyses the reaction [[Fe-S] cluster scaffold protein carrying a second [4Fe-4S](2+) cluster] + N(6)-octanoyl-L-lysyl-[protein] + 2 oxidized [2Fe-2S]-[ferredoxin] + 2 S-adenosyl-L-methionine + 4 H(+) = [[Fe-S] cluster scaffold protein] + N(6)-[(R)-dihydrolipoyl]-L-lysyl-[protein] + 4 Fe(3+) + 2 hydrogen sulfide + 2 5'-deoxyadenosine + 2 L-methionine + 2 reduced [2Fe-2S]-[ferredoxin]. It participates in protein modification; protein lipoylation via endogenous pathway; protein N(6)-(lipoyl)lysine from octanoyl-[acyl-carrier-protein]: step 2/2. Its function is as follows. Catalyzes the radical-mediated insertion of two sulfur atoms into the C-6 and C-8 positions of the octanoyl moiety bound to the lipoyl domains of lipoate-dependent enzymes, thereby converting the octanoylated domains into lipoylated derivatives. The chain is Lipoyl synthase, mitochondrial from Leishmania braziliensis.